Reading from the N-terminus, the 140-residue chain is Putative pre-16S rRNA nuclease (140 aa).

Belongs to the YqgF nuclease family.

It is found in the cytoplasm. In terms of biological role, could be a nuclease involved in processing of the 5'-end of pre-16S rRNA. The protein is Putative pre-16S rRNA nuclease of Lachnospira eligens (strain ATCC 27750 / DSM 3376 / VPI C15-48 / C15-B4) (Eubacterium eligens).